Consider the following 310-residue polypeptide: Methionyl-tRNA formyltransferase (310 aa).

110 to 113 serves as a coordination point for (6S)-5,6,7,8-tetrahydrofolate; sequence SLLP.

It belongs to the Fmt family.

The catalysed reaction is L-methionyl-tRNA(fMet) + (6R)-10-formyltetrahydrofolate = N-formyl-L-methionyl-tRNA(fMet) + (6S)-5,6,7,8-tetrahydrofolate + H(+). Attaches a formyl group to the free amino group of methionyl-tRNA(fMet). The formyl group appears to play a dual role in the initiator identity of N-formylmethionyl-tRNA by promoting its recognition by IF2 and preventing the misappropriation of this tRNA by the elongation apparatus. The sequence is that of Methionyl-tRNA formyltransferase from Halorhodospira halophila (strain DSM 244 / SL1) (Ectothiorhodospira halophila (strain DSM 244 / SL1)).